We begin with the raw amino-acid sequence, 308 residues long: Ribosomal RNA large subunit methyltransferase F (308 aa).

It belongs to the methyltransferase superfamily. METTL16/RlmF family.

It localises to the cytoplasm. The catalysed reaction is adenosine(1618) in 23S rRNA + S-adenosyl-L-methionine = N(6)-methyladenosine(1618) in 23S rRNA + S-adenosyl-L-homocysteine + H(+). Specifically methylates the adenine in position 1618 of 23S rRNA. This chain is Ribosomal RNA large subunit methyltransferase F, found in Escherichia coli O6:H1 (strain CFT073 / ATCC 700928 / UPEC).